The chain runs to 1288 residues: MALSLSQDRSFDDDDSVDGSRPSSAQAAFKVPKVPKKPAESASSSRRPSATGAAKSGASKEGAGAVDEEDFIKAFTDVPTVQIYSTRDLEDNLNKIREVLSDDKHDWDHRANALKKIRSLLVAGATDYDCFYQHLRLLDGAFKLSAKDLRSQVVREACITVAYLSTLLGNKFDHGAEGIVPVLFNLIPNCAKVMATSGTAAIRIIIRHTHVPRLIPLIASNCTSKSVAVRRRCYEFLDLLLQEWQTHSLERHAAVLVESIKKGIRDADAEARVEARKAYWGLRAHFPGEAESLYNSLESSYQRTLQSCLKSSGSVASLPQSDRSSSSSQESLNRPLSKWSAAPGRVPAGSKSSGSPASLQRSRSDVDVNAAAGAKARHSGQAGGAGRVTTGLTPGSYASLGRLRTKQTLSTASSVGSSQVDSRGRTRSKMASQSQRSDDSDCTPGSQSATPVGAGSRSGSPGRVLASTALSTLSTGAQRVSAAPGSHRRSRIPRSQGCSRDSSPTRLSVAPSNISHIYNGSKGARGSRIPRPSVSQGCSREASRESSRDTSPVRSFTPLGSGLGMSQSSRLSSSVSAMRVLNTGSDVEEALADALKKPARRRYDTYGMYSDDDANSDASSACSERSYSSRNGSIPTYMRQTEDVAEVLNRCASANWSERKEGLMGLQALLKNHRTLSRVELKRLCEIFTRMFADPHSKRDPRGFGTVESGISSASFKRVFSMFLETLVDFIAVHKEDLQDWLFVLLTQLLKKMGADLLGSVQAKVQKALDVTRESFPNDLQFTILMRFTVDQTQTPNLKVKVAILKYIETLTLQMEPQDFVNTGETRLAVSRIITWTTEPKSSDVRKAAQSVLISLFQLNTPEFTMLLGALPKTFQDGATKLLQNHLRNTGNTAQASIGSPLTRHTPRSPASWSSPLTSPTNTSQNTPSPSAFDYDTENMNSEEIYSSLRGVSQAIQNFSVRSQEDMTEPPRKREGDGGEETVDSGRTALDNKTSLLNTMPLLSSSPRPSRDYQPVNYSDSSFGSSSFNKSLKDADQEESLTDDSGVDQSEVVAELLKELSNHSERVEERKAALCELMRLIRETQLHVWDEHFKTILLLLLETLGDGEHVIRALALRVLKEILNRQPWRFKNYAELTIMKALEAHKDPHKEVVRAAEEAASMLATSISPDQCIKVLCPIIQSADYPINLAAIKMLTKVIDRLPKEGLIQMLPEIVPGLIQGYDNSESSVRKACVFCLVAIYAVIGEDLKPHLSQLSGSKLKLLNLYIKRAQSGSSGSDQSSDVGGQGL.

The tract at residues 1 to 62 is disordered; sequence MALSLSQDRS…AAKSGASKEG (62 aa). Composition is skewed to low complexity over residues 19-32 and 40-62; these read GSRPSSAQAAFKVP and ESASSSRRPSATGAAKSGASKEG. Residues 62 to 312 form a TOG 1 region; sequence GAGAVDEEDF…RTLQSCLKSS (251 aa). HEAT repeat units follow at residues 174 to 209, 210 to 246, and 251 to 288; these read HGAEGIVPVLFNLIPNCAKVMATSGTAAIRIIIRHT, HVPRLIPLIASNCTSKSVAVRRRCYEFLDLLLQEWQT, and RHAAVLVESIKKGIRDADAEARVEARKAYWGLRAHFPG. Disordered stretches follow at residues 314-571 and 614-634; these read SVAS…SSRL and ANSDASSACSERSYSSRNGSI. 2 stretches are compositionally biased toward low complexity: residues 317–337 and 347–358; these read SLPQSDRSSSSSQESLNRPLS and PAGSKSSGSPAS. 2 stretches are compositionally biased toward polar residues: residues 406–421 and 468–478; these read KQTLSTASSVGSSQVD and TALSTLSTGAQ. The SXIP motif 1 signature appears at 490 to 493; the sequence is SRIP. The span at 496-518 shows a compositional bias: polar residues; the sequence is QGCSRDSSPTRLSVAPSNISHIY. Positions 527-530 match the SXIP motif 2 motif; it reads SRIP. The segment covering 616–630 has biased composition (low complexity); it reads SDASSACSERSYSSR. The segment at 638 to 889 is TOG 2; that stretch reads MRQTEDVAEV…TKLLQNHLRN (252 aa). HEAT repeat units follow at residues 718-755 and 780-817; these read RVFSMFLETLVDFIAVHKEDLQDWLFVLLTQLLKKMGA and LQFTILMRFTVDQTQTPNLKVKVAILKYIETLTLQMEP. Residues 891 to 900 are compositionally biased toward polar residues; sequence GNTAQASIGS. Disordered regions lie at residues 891 to 936 and 960 to 1047; these read GNTA…FDYD and SVRS…DSGV. The segment covering 912–931 has biased composition (low complexity); sequence SWSSPLTSPTNTSQNTPSPS. Positions 963–977 are enriched in basic and acidic residues; it reads SQEDMTEPPRKREGD. The segment covering 1019–1030 has biased composition (low complexity); that stretch reads SDSSFGSSSFNK. Over residues 1036-1046 the composition is skewed to acidic residues; sequence DQEESLTDDSG. HEAT repeat units lie at residues 1047–1086, 1091–1128, 1167–1204, and 1209–1246; these read VDQSEVVAELLKELSNHSERVEERKAALCELMRLIRETQL, EHFKTILLLLLETLGDGEHVIRALALRVLKEILNRQPW, ISPDQCIKVLCPIIQSADYPINLAAIKMLTKVIDRLPK, and QMLPEIVPGLIQGYDNSESSVRKACVFCLVAIYAVIGE.

This sequence belongs to the CLASP family. In terms of assembly, interacts with microtubules.

Its subcellular location is the cytoplasm. It localises to the cytoskeleton. The protein localises to the microtubule organizing center. The protein resides in the centrosome. It is found in the chromosome. Its subcellular location is the centromere. It localises to the kinetochore. The protein localises to the spindle. The protein resides in the golgi apparatus. It is found in the trans-Golgi network. Its subcellular location is the cell membrane. It localises to the cell projection. The protein localises to the ruffle membrane. Its function is as follows. Microtubule plus-end tracking protein that promotes the stabilization of dynamic microtubules. Involved in the nucleation of noncentrosomal microtubules originating from the trans-Golgi network (TGN). Required for the polarization of the cytoplasmic microtubule arrays in migrating cells towards the leading edge of the cell. May act at the cell cortex to enhance the frequency of rescue of depolymerizing microtubules. This cortical microtubule stabilizing activity is regulated at least in part by phosphatidylinositol 3-kinase signaling. Also performs a similar stabilizing function at the kinetochore which is essential for the bipolar alignment of chromosomes on the mitotic spindle. The polypeptide is CLIP-associating protein 2 (clasp2) (Danio rerio (Zebrafish)).